Consider the following 307-residue polypeptide: 4-hydroxythreonine-4-phosphate dehydrogenase (307 aa).

Substrate contacts are provided by His126 and Thr127. The a divalent metal cation site is built by His156, His195, and His251. The substrate site is built by Lys259, Asn268, and Arg277.

It belongs to the PdxA family. In terms of assembly, homodimer. It depends on Zn(2+) as a cofactor. Mg(2+) serves as cofactor. The cofactor is Co(2+).

The protein resides in the cytoplasm. It carries out the reaction 4-(phosphooxy)-L-threonine + NAD(+) = 3-amino-2-oxopropyl phosphate + CO2 + NADH. The protein operates within cofactor biosynthesis; pyridoxine 5'-phosphate biosynthesis; pyridoxine 5'-phosphate from D-erythrose 4-phosphate: step 4/5. In terms of biological role, catalyzes the NAD(P)-dependent oxidation of 4-(phosphooxy)-L-threonine (HTP) into 2-amino-3-oxo-4-(phosphooxy)butyric acid which spontaneously decarboxylates to form 3-amino-2-oxopropyl phosphate (AHAP). This chain is 4-hydroxythreonine-4-phosphate dehydrogenase, found in Helicobacter pylori (strain ATCC 700392 / 26695) (Campylobacter pylori).